We begin with the raw amino-acid sequence, 310 residues long: tRNA-cytidine(32) 2-sulfurtransferase (310 aa).

A PP-loop motif motif is present at residues 47–52; it reads SGGKDS. [4Fe-4S] cluster is bound by residues Cys-122, Cys-125, and Cys-213.

It belongs to the TtcA family. In terms of assembly, homodimer. The cofactor is Mg(2+). [4Fe-4S] cluster is required as a cofactor.

It localises to the cytoplasm. The enzyme catalyses cytidine(32) in tRNA + S-sulfanyl-L-cysteinyl-[cysteine desulfurase] + AH2 + ATP = 2-thiocytidine(32) in tRNA + L-cysteinyl-[cysteine desulfurase] + A + AMP + diphosphate + H(+). It participates in tRNA modification. Its function is as follows. Catalyzes the ATP-dependent 2-thiolation of cytidine in position 32 of tRNA, to form 2-thiocytidine (s(2)C32). The sulfur atoms are provided by the cysteine/cysteine desulfurase (IscS) system. The chain is tRNA-cytidine(32) 2-sulfurtransferase from Cronobacter sakazakii (strain ATCC BAA-894) (Enterobacter sakazakii).